Here is a 318-residue protein sequence, read N- to C-terminus: UAP56-interacting factor (318 aa).

Met-1 carries the post-translational modification N-acetylmethionine. The tract at residues 1–27 (MNRFSTRLMGATATPPPAPPKARSNEN) is disordered. Thr-14 is modified (phosphothreonine). The residue at position 24 (Ser-24) is a Phosphoserine. Residues 27–45 (NLDKIDMSLDDIIKLNRKE) carry the UAP56-binding motif motif. Phosphoserine occurs at positions 61 and 118. Lys-140 participates in a covalent cross-link: Glycyl lysine isopeptide (Lys-Gly) (interchain with G-Cter in SUMO1). The span at 163 to 180 (LNRKNNIPNNFTRSGNKL) shows a compositional bias: polar residues. Positions 163 to 183 (LNRKNNIPNNFTRSGNKLSHQ) are disordered. Lys-261 is covalently cross-linked (Glycyl lysine isopeptide (Lys-Gly) (interchain with G-Cter in SUMO2)).

The protein belongs to the UIF family. Interacts with DDX39B/UAP56 and NXF1; interaction with DDX39B/UAP56 and NXF1 are mutually exclusive. Interacts with SSRP1; required for its recruitment to mRNAs. Interacts with CHTOP.

Its subcellular location is the nucleus. It is found in the nucleoplasm. The protein resides in the nucleus speckle. Required for mRNA export from the nucleus to the cytoplasm. Acts as an adapter that uses the DDX39B/UAP56-NFX1 pathway to ensure efficient mRNA export and delivering to the nuclear pore. Associates with spliced and unspliced mRNAs simultaneously with ALYREF/THOC4. The polypeptide is UAP56-interacting factor (FYTTD1) (Bos taurus (Bovine)).